Consider the following 97-residue polypeptide: Ribosomal biogenesis factor (97 aa).

Position 19 is a phosphoserine (serine 19). N6-acetyllysine is present on lysine 21. Serine 69 carries the post-translational modification Phosphoserine.

Associates with the pre-60S ribosomal particles.

The protein resides in the nucleus. It is found in the nucleolus. Functionally, trans-acting factor in ribosome biogenesis required for efficient 40S and 60S subunit production. This is Ribosomal biogenesis factor (Rbis) from Mus musculus (Mouse).